The following is a 379-amino-acid chain: Homoserine O-succinyltransferase (379 aa).

One can recognise an AB hydrolase-1 domain in the interval 48–357 (NAVLICHALS…SAHGHDAFLM (310 aa)). The Nucleophile role is filled by Ser-154. Residue Arg-224 coordinates substrate. Catalysis depends on residues Asp-319 and His-352. Asp-353 contacts substrate.

It belongs to the AB hydrolase superfamily. MetX family. Homodimer.

It is found in the cytoplasm. It catalyses the reaction L-homoserine + succinyl-CoA = O-succinyl-L-homoserine + CoA. Its pathway is amino-acid biosynthesis; L-methionine biosynthesis via de novo pathway; O-succinyl-L-homoserine from L-homoserine: step 1/1. Transfers a succinyl group from succinyl-CoA to L-homoserine, forming succinyl-L-homoserine. In Neisseria meningitidis serogroup B (strain ATCC BAA-335 / MC58), this protein is Homoserine O-succinyltransferase.